Reading from the N-terminus, the 275-residue chain is Dermonecrotic toxin SpaSicTox-betaIIA1 (275 aa).

Residue histidine 5 is part of the active site. Mg(2+) contacts are provided by glutamate 25 and aspartate 27. The active-site Nucleophile is histidine 41. Intrachain disulfides connect cysteine 45-cysteine 51 and cysteine 47-cysteine 190. Residue aspartate 85 coordinates Mg(2+).

It belongs to the arthropod phospholipase D family. Class II subfamily. It depends on Mg(2+) as a cofactor. As to expression, expressed by the venom gland.

It is found in the secreted. It catalyses the reaction an N-(acyl)-sphingosylphosphocholine = an N-(acyl)-sphingosyl-1,3-cyclic phosphate + choline. The enzyme catalyses an N-(acyl)-sphingosylphosphoethanolamine = an N-(acyl)-sphingosyl-1,3-cyclic phosphate + ethanolamine. The catalysed reaction is a 1-acyl-sn-glycero-3-phosphocholine = a 1-acyl-sn-glycero-2,3-cyclic phosphate + choline. It carries out the reaction a 1-acyl-sn-glycero-3-phosphoethanolamine = a 1-acyl-sn-glycero-2,3-cyclic phosphate + ethanolamine. Functionally, dermonecrotic toxins cleave the phosphodiester linkage between the phosphate and headgroup of certain phospholipids (sphingolipid and lysolipid substrates), forming an alcohol (often choline) and a cyclic phosphate. This toxin acts on sphingomyelin (SM). It may also act on ceramide phosphoethanolamine (CPE), lysophosphatidylcholine (LPC) and lysophosphatidylethanolamine (LPE), but not on lysophosphatidylserine (LPS), and lysophosphatidylglycerol (LPG). It acts by transphosphatidylation, releasing exclusively cyclic phosphate products as second products. Induces dermonecrosis, hemolysis, increased vascular permeability, edema, inflammatory response, and platelet aggregation. This chain is Dermonecrotic toxin SpaSicTox-betaIIA1, found in Sicarius patagonicus (Six-eyed sand spider).